The following is a 271-amino-acid chain: Phosphate import ATP-binding protein PstB 2 (271 aa).

In terms of domain architecture, ABC transporter spans 25–266 (MATEDLHVYY…PQEKQTEDYI (242 aa)). An ATP-binding site is contributed by 57–64 (GPSGCGKS).

This sequence belongs to the ABC transporter superfamily. Phosphate importer (TC 3.A.1.7) family. In terms of assembly, the complex is composed of two ATP-binding proteins (PstB), two transmembrane proteins (PstC and PstA) and a solute-binding protein (PstS).

It localises to the cell membrane. It carries out the reaction phosphate(out) + ATP + H2O = ADP + 2 phosphate(in) + H(+). Its function is as follows. Part of the ABC transporter complex PstSACB involved in phosphate import. Responsible for energy coupling to the transport system. The sequence is that of Phosphate import ATP-binding protein PstB 2 from Listeria monocytogenes serovar 1/2a (strain ATCC BAA-679 / EGD-e).